The following is a 346-amino-acid chain: D-alanine--D-alanine ligase (346 aa).

The region spanning 133-327 (KLYAKSVGVK…ALADQISLEK (195 aa)) is the ATP-grasp domain. 159–211 (LSFPCIIKPARLGSSIGISIVKDEKDLEYAKDVGFEFDNDLVVEEFKNNIKEY) provides a ligand contact to ATP. Mg(2+) contacts are provided by aspartate 284, glutamate 296, and asparagine 298.

Belongs to the D-alanine--D-alanine ligase family. Requires Mg(2+) as cofactor. Mn(2+) is required as a cofactor.

The protein resides in the cytoplasm. The enzyme catalyses 2 D-alanine + ATP = D-alanyl-D-alanine + ADP + phosphate + H(+). Its pathway is cell wall biogenesis; peptidoglycan biosynthesis. Its function is as follows. Cell wall formation. The sequence is that of D-alanine--D-alanine ligase from Campylobacter jejuni subsp. jejuni serotype O:2 (strain ATCC 700819 / NCTC 11168).